A 322-amino-acid chain; its full sequence is Digestive cysteine proteinase 1 (322 aa).

The N-terminal stretch at 1 to 16 (MKVVALFLFGLALAAA) is a signal peptide. Positions 17–105 (NPSWEEFKGK…VFTSTDAAPE (89 aa)) are cleaved as a propeptide — activation peptide. Cystine bridges form between C126/C170, C160/C203, and C262/C311. The active site involves C129. Residues H269 and N289 contribute to the active site.

This sequence belongs to the peptidase C1 family.

Its activity is regulated as follows. Inhibited by E-64, antipain, leupeptin, heavy metal ions, iodoacetic acid, dithionitrobenzene, p-hydroxymercuri-benzoate; activated by mercaptoethanol and dithiothreitol. This chain is Digestive cysteine proteinase 1 (LCP1), found in Homarus americanus (American lobster).